Reading from the N-terminus, the 641-residue chain is Phosphomethylpyrimidine synthase (641 aa).

Positions 1–12 (MTDTSTQNTATP) are enriched in polar residues. The interval 1–25 (MTDTSTQNTATPTDEYGAEIHPKHS) is disordered. Substrate contacts are provided by residues N200, M229, Y258, H294, 314–316 (SRG), 355–358 (DGLR), and E394. H398 is a Zn(2+) binding site. A substrate-binding site is contributed by Y421. H462 serves as a coordination point for Zn(2+). Positions 542, 545, and 550 each coordinate [4Fe-4S] cluster.

The protein belongs to the ThiC family. Requires [4Fe-4S] cluster as cofactor.

The catalysed reaction is 5-amino-1-(5-phospho-beta-D-ribosyl)imidazole + S-adenosyl-L-methionine = 4-amino-2-methyl-5-(phosphooxymethyl)pyrimidine + CO + 5'-deoxyadenosine + formate + L-methionine + 3 H(+). Its pathway is cofactor biosynthesis; thiamine diphosphate biosynthesis. Functionally, catalyzes the synthesis of the hydroxymethylpyrimidine phosphate (HMP-P) moiety of thiamine from aminoimidazole ribotide (AIR) in a radical S-adenosyl-L-methionine (SAM)-dependent reaction. The protein is Phosphomethylpyrimidine synthase of Corynebacterium jeikeium (strain K411).